Here is a 597-residue protein sequence, read N- to C-terminus: CTP synthase (597 aa).

The segment at 1–272 (MARPKNVKYV…DMRVLKKLGL (272 aa)) is amidoligase domain. Ser18 contributes to the CTP binding site. Residue Ser18 participates in UTP binding. 19 to 24 (SLGKGI) contacts ATP. Tyr59 is a binding site for L-glutamine. Asp76 is an ATP binding site. Mg(2+) is bound by residues Asp76 and Glu146. CTP-binding positions include 153 to 155 (DIE), 193 to 198 (KTKPTQ), and Lys229. Residues 193-198 (KTKPTQ) and Lys229 each bind UTP. Positions 299–543 (NVAICGKYTE…VGAAKAYADG (245 aa)) constitute a Glutamine amidotransferase type-1 domain. Position 363 (Gly363) interacts with L-glutamine. Cys390 functions as the Nucleophile; for glutamine hydrolysis in the catalytic mechanism. L-glutamine is bound by residues 391–394 (LGMQ), Glu414, and Arg471. Residues His516 and Glu518 contribute to the active site.

It belongs to the CTP synthase family. Homotetramer.

The catalysed reaction is UTP + L-glutamine + ATP + H2O = CTP + L-glutamate + ADP + phosphate + 2 H(+). It carries out the reaction L-glutamine + H2O = L-glutamate + NH4(+). The enzyme catalyses UTP + NH4(+) + ATP = CTP + ADP + phosphate + 2 H(+). It participates in pyrimidine metabolism; CTP biosynthesis via de novo pathway; CTP from UDP: step 2/2. Its activity is regulated as follows. Allosterically activated by GTP, when glutamine is the substrate; GTP has no effect on the reaction when ammonia is the substrate. The allosteric effector GTP functions by stabilizing the protein conformation that binds the tetrahedral intermediate(s) formed during glutamine hydrolysis. Inhibited by the product CTP, via allosteric rather than competitive inhibition. Catalyzes the ATP-dependent amination of UTP to CTP with either L-glutamine or ammonia as the source of nitrogen. Regulates intracellular CTP levels through interactions with the four ribonucleotide triphosphates. This is CTP synthase from Chlorobium luteolum (strain DSM 273 / BCRC 81028 / 2530) (Pelodictyon luteolum).